Reading from the N-terminus, the 233-residue chain is Pirin-like protein YhaK (233 aa).

The protein belongs to the pirin family. Monomer.

It localises to the cytoplasm. Its function is as follows. Does not have quercetin 2,3-dioxygenase activity. This chain is Pirin-like protein YhaK (yhaK), found in Escherichia coli (strain K12).